The chain runs to 235 residues: ATP-dependent Clp protease proteolytic subunit (235 aa).

Catalysis depends on Ser123, which acts as the Nucleophile. His148 is an active-site residue.

Belongs to the peptidase S14 family. In terms of assembly, fourteen ClpP subunits assemble into 2 heptameric rings which stack back to back to give a disk-like structure with a central cavity, resembling the structure of eukaryotic proteasomes.

Its subcellular location is the cytoplasm. It catalyses the reaction Hydrolysis of proteins to small peptides in the presence of ATP and magnesium. alpha-casein is the usual test substrate. In the absence of ATP, only oligopeptides shorter than five residues are hydrolyzed (such as succinyl-Leu-Tyr-|-NHMec, and Leu-Tyr-Leu-|-Tyr-Trp, in which cleavage of the -Tyr-|-Leu- and -Tyr-|-Trp bonds also occurs).. In terms of biological role, cleaves peptides in various proteins in a process that requires ATP hydrolysis. Has a chymotrypsin-like activity. Plays a major role in the degradation of misfolded proteins. The chain is ATP-dependent Clp protease proteolytic subunit from Novosphingobium aromaticivorans (strain ATCC 700278 / DSM 12444 / CCUG 56034 / CIP 105152 / NBRC 16084 / F199).